A 255-amino-acid polypeptide reads, in one-letter code: tRNA (guanine-N(1)-)-methyltransferase (255 aa).

Residues Gly113 and 133-138 (IGDYVL) contribute to the S-adenosyl-L-methionine site.

This sequence belongs to the RNA methyltransferase TrmD family. In terms of assembly, homodimer.

It localises to the cytoplasm. It carries out the reaction guanosine(37) in tRNA + S-adenosyl-L-methionine = N(1)-methylguanosine(37) in tRNA + S-adenosyl-L-homocysteine + H(+). In terms of biological role, specifically methylates guanosine-37 in various tRNAs. In Salmonella choleraesuis (strain SC-B67), this protein is tRNA (guanine-N(1)-)-methyltransferase.